The following is a 280-amino-acid chain: Lysosome-associated membrane glycoprotein 5 (280 aa).

Positions 1–29 are cleaved as a signal peptide; that stretch reads MDLRVRTLLGGDRLRILLMFFHVMVQTVA. The Extracellular segment spans residues 30–235; the sequence is EQEVENLSGL…PVDEQEQLEE (206 aa). Asn35, Asn53, Asn102, and Asn127 each carry an N-linked (GlcNAc...) asparagine glycan. A helical membrane pass occupies residues 236 to 256; the sequence is TLPLILGLILGLVIVITLVIY. Residues 257–280 are Cytoplasmic-facing; that stretch reads HIHHKMTANQVQIPRDRSQYKHMG.

The protein belongs to the LAMP family. Post-translationally, glycosylated. In brain, strongly expressed in the globus pallidus/ventral pallidum complex, the substantia nigra pars reticulata and the entopeduncular nucleus (at protein level). Expressed in the external plexiform layer of the olfactory bulb (at protein level). May be weakly expressed in neocortex and striatum (at protein level). Highly expressed in brain; not detected in other tissues tested. Detected in the cingulate cortex, cortical plate and caudate putamen. In neocortex, specifically expressed in neurons of layers II/III and V.

It is found in the cytoplasmic vesicle membrane. It localises to the cell membrane. The protein resides in the cell projection. The protein localises to the dendrite. Its subcellular location is the cytoplasmic vesicle. It is found in the secretory vesicle. It localises to the synaptic vesicle membrane. The protein resides in the growth cone membrane. The protein localises to the early endosome membrane. Its subcellular location is the recycling endosome. It is found in the endoplasmic reticulum-Golgi intermediate compartment membrane. It localises to the endosome membrane. Plays a role in short-term synaptic plasticity in a subset of GABAergic neurons in the brain. The chain is Lysosome-associated membrane glycoprotein 5 (Lamp5) from Mus musculus (Mouse).